A 319-amino-acid polypeptide reads, in one-letter code: uncharacterized protein (319 aa).

9 helical membrane-spanning segments follow: residues 11–31 (GLWA…LGVF), 43–63 (ALGW…GVWW), 83–103 (LSVD…IPAL), 108–128 (VLFW…FAGV), 134–154 (FHWL…KLFL), 195–215 (LATP…LFAL), 220–240 (AIFA…FAIL), 260–280 (KVGL…IDFV), and 284–304 (PEVS…ASLI).

This sequence belongs to the TerC family.

The protein localises to the cell membrane. This is an uncharacterized protein from Myxococcus xanthus.